Here is a 306-residue protein sequence, read N- to C-terminus: Foldase protein PrsA (306 aa).

Residues 1–20 (MRRKIALFLALIFVGVSLVS) form the signal peptide. Cysteine 21 carries the N-palmitoyl cysteine lipid modification. Residue cysteine 21 is the site of S-diacylglycerol cysteine attachment. One can recognise a PpiC domain in the interval 165–255 (FEVMRARHIL…YGYHIIKSEG (91 aa)).

It belongs to the PrsA family.

It localises to the cell membrane. It catalyses the reaction [protein]-peptidylproline (omega=180) = [protein]-peptidylproline (omega=0). Its function is as follows. Plays a major role in protein secretion by helping the post-translocational extracellular folding of several secreted proteins. This Caldanaerobacter subterraneus subsp. tengcongensis (strain DSM 15242 / JCM 11007 / NBRC 100824 / MB4) (Thermoanaerobacter tengcongensis) protein is Foldase protein PrsA.